A 185-amino-acid polypeptide reads, in one-letter code: Crossover junction endodeoxyribonuclease RuvC (185 aa).

Catalysis depends on residues Asp7, Glu66, and Asp137. Mg(2+) is bound by residues Asp7, Glu66, and Asp137.

Belongs to the RuvC family. In terms of assembly, homodimer which binds Holliday junction (HJ) DNA. The HJ becomes 2-fold symmetrical on binding to RuvC with unstacked arms; it has a different conformation from HJ DNA in complex with RuvA. In the full resolvosome a probable DNA-RuvA(4)-RuvB(12)-RuvC(2) complex forms which resolves the HJ. Mg(2+) serves as cofactor.

Its subcellular location is the cytoplasm. It catalyses the reaction Endonucleolytic cleavage at a junction such as a reciprocal single-stranded crossover between two homologous DNA duplexes (Holliday junction).. Functionally, the RuvA-RuvB-RuvC complex processes Holliday junction (HJ) DNA during genetic recombination and DNA repair. Endonuclease that resolves HJ intermediates. Cleaves cruciform DNA by making single-stranded nicks across the HJ at symmetrical positions within the homologous arms, yielding a 5'-phosphate and a 3'-hydroxyl group; requires a central core of homology in the junction. The consensus cleavage sequence is 5'-(A/T)TT(C/G)-3'. Cleavage occurs on the 3'-side of the TT dinucleotide at the point of strand exchange. HJ branch migration catalyzed by RuvA-RuvB allows RuvC to scan DNA until it finds its consensus sequence, where it cleaves and resolves the cruciform DNA. This Anaeromyxobacter dehalogenans (strain 2CP-C) protein is Crossover junction endodeoxyribonuclease RuvC.